The sequence spans 398 residues: Putative defective protein IntQ (398 aa).

Positions 51-146 (LTIKELAEKF…NLNAVFQFGV (96 aa)) constitute a Core-binding (CB) domain. In terms of domain architecture, Tyr recombinase spans 167–378 (TIPDPLSREE…SENNNAQVAL (212 aa)). Catalysis depends on residues R202, K236, R331, and H354. Y364 serves as the catalytic O-(3'-phospho-DNA)-tyrosine intermediate.

It belongs to the 'phage' integrase family.

Its function is as follows. Integrase is necessary for integration of the phage into the host genome by site-specific recombination. In conjunction with excisionase, integrase is also necessary for excision of the prophage from the host genome. This chain is Putative defective protein IntQ (intQ), found in Escherichia coli (strain K12).